We begin with the raw amino-acid sequence, 240 residues long: 2,3,4,5-tetrahydropyridine-2,6-dicarboxylate N-acetyltransferase (240 aa).

The protein belongs to the transferase hexapeptide repeat family. DapH subfamily.

It carries out the reaction (S)-2,3,4,5-tetrahydrodipicolinate + acetyl-CoA + H2O = L-2-acetamido-6-oxoheptanedioate + CoA. The protein operates within amino-acid biosynthesis; L-lysine biosynthesis via DAP pathway; LL-2,6-diaminopimelate from (S)-tetrahydrodipicolinate (acetylase route): step 1/3. Its function is as follows. Catalyzes the transfer of an acetyl group from acetyl-CoA to tetrahydrodipicolinate. The chain is 2,3,4,5-tetrahydropyridine-2,6-dicarboxylate N-acetyltransferase from Bacillus thuringiensis (strain Al Hakam).